Here is a 208-residue protein sequence, read N- to C-terminus: GTP cyclohydrolase 1 (208 aa).

Zn(2+) contacts are provided by C98, H101, and C169.

Belongs to the GTP cyclohydrolase I family. Toroid-shaped homodecamer, composed of two pentamers of five dimers.

It catalyses the reaction GTP + H2O = 7,8-dihydroneopterin 3'-triphosphate + formate + H(+). It participates in cofactor biosynthesis; 7,8-dihydroneopterin triphosphate biosynthesis; 7,8-dihydroneopterin triphosphate from GTP: step 1/1. This Agrobacterium fabrum (strain C58 / ATCC 33970) (Agrobacterium tumefaciens (strain C58)) protein is GTP cyclohydrolase 1.